We begin with the raw amino-acid sequence, 539 residues long: Phosphoenolpyruvate carboxykinase (ATP) (539 aa).

Residues Arg64, Tyr206, and Lys212 each contribute to the substrate site. ATP is bound by residues Lys212, His231, and 247-255 (GLSGTGKTT). 2 residues coordinate Mn(2+): Lys212 and His231. Asp268 lines the Mn(2+) pocket. ATP contacts are provided by residues Glu296, Arg332, 448 to 449 (RI), and Thr454. Substrate is bound at residue Arg332.

This sequence belongs to the phosphoenolpyruvate carboxykinase (ATP) family. As to quaternary structure, monomer. Mn(2+) is required as a cofactor.

It is found in the cytoplasm. The enzyme catalyses oxaloacetate + ATP = phosphoenolpyruvate + ADP + CO2. It functions in the pathway carbohydrate biosynthesis; gluconeogenesis. In terms of biological role, involved in the gluconeogenesis. Catalyzes the conversion of oxaloacetate (OAA) to phosphoenolpyruvate (PEP) through direct phosphoryl transfer between the nucleoside triphosphate and OAA. The sequence is that of Phosphoenolpyruvate carboxykinase (ATP) from Yersinia pestis bv. Antiqua (strain Antiqua).